The following is a 199-amino-acid chain: GTP-binding protein Di-Ras2 (199 aa).

GTP-binding positions include 14-21 (GAGGVGKS), 33-39 (RESYIPT), 61-65 (DTTGS), and 121-124 (NKCD). Residue serine 35 is modified to Phosphoserine. The short motif at 36-44 (YIPTVEDTY) is the Effector region element. Residue serine 126 is modified to Phosphoserine. A GTP-binding site is contributed by 152-153 (AK). Cysteine 196 carries the post-translational modification Cysteine methyl ester. Residue cysteine 196 is the site of S-geranylgeranyl cysteine attachment. A propeptide spans 197-199 (VVM) (removed in mature form).

The protein belongs to the small GTPase superfamily. Di-Ras family. Ubiquitinated by the ECS(ASB11) complex via 'Lys-11'-linked ubiquitin chains, leading to its degradation by the proteasome.

The protein localises to the cell membrane. It carries out the reaction GTP + H2O = GDP + phosphate + H(+). In terms of biological role, displays low GTPase activity and exists predominantly in the GTP-bound form. The protein is GTP-binding protein Di-Ras2 (Diras2) of Mus musculus (Mouse).